The primary structure comprises 67 residues: Small ribosomal subunit protein bS21 (67 aa).

This sequence belongs to the bacterial ribosomal protein bS21 family.

The protein is Small ribosomal subunit protein bS21 of Rhodospirillum centenum (strain ATCC 51521 / SW).